Consider the following 796-residue polypeptide: Cadherin-11 (796 aa).

The signal sequence occupies residues 1–22; the sequence is MKENYCLQAALVCLGMLCHSHA. The propeptide occupies 23 to 53; the sequence is FAPERRGHLRPSFHGHHEKGKEGQVLQRSKR. 5 Cadherin domains span residues 54-159, 160-268, 269-383, 384-486, and 487-612; these read GWVW…PPEF, LHET…PPKF, PQSV…PPMF, LAPS…DNAP, and KFAA…YILN. Over 54–617 the chain is Extracellular; it reads GWVWNQFFVI…AYILNAGLST (564 aa). N-linked (GlcNAc...) asparagine glycans are attached at residues Asn-455 and Asn-540. Residues 618–640 traverse the membrane as a helical segment; it reads GALIAILACIVILLVIVVLFVTL. At 641–796 the chain is on the cytoplasmic side; the sequence is RRQKKEPLIV…GSKDTFDDDS (156 aa). Position 788 is a phosphoserine (Ser-788). At Thr-791 the chain carries Phosphothreonine.

As to quaternary structure, interacts with PCDH8. Expressed mainly in brain but also found in other tissues. Expressed in neuroblasts. In the embryo from 67 to 72 days of gestation, detected at high levels in facial mesenchyme including the central palatal mesenchyme, dental mesenchyme, the eye and optic muscle, and the tongue (at protein level).

It localises to the cell membrane. Its function is as follows. Cadherins are calcium-dependent cell adhesion proteins. They preferentially interact with themselves in a homophilic manner in connecting cells; cadherins may thus contribute to the sorting of heterogeneous cell types. Required for proper focal adhesion assembly. Involved in the regulation of cell migration. The chain is Cadherin-11 (CDH11) from Homo sapiens (Human).